A 299-amino-acid polypeptide reads, in one-letter code: Bifunctional protein FolD (299 aa).

NADP(+) is bound by residues 168–170 (GRS), serine 193, and isoleucine 234.

Belongs to the tetrahydrofolate dehydrogenase/cyclohydrolase family. Homodimer.

It catalyses the reaction (6R)-5,10-methylene-5,6,7,8-tetrahydrofolate + NADP(+) = (6R)-5,10-methenyltetrahydrofolate + NADPH. It carries out the reaction (6R)-5,10-methenyltetrahydrofolate + H2O = (6R)-10-formyltetrahydrofolate + H(+). It participates in one-carbon metabolism; tetrahydrofolate interconversion. Its function is as follows. Catalyzes the oxidation of 5,10-methylenetetrahydrofolate to 5,10-methenyltetrahydrofolate and then the hydrolysis of 5,10-methenyltetrahydrofolate to 10-formyltetrahydrofolate. The protein is Bifunctional protein FolD of Agrobacterium fabrum (strain C58 / ATCC 33970) (Agrobacterium tumefaciens (strain C58)).